The following is a 442-amino-acid chain: MDAWPRCLERLEAEFPPEDVHTWLKPLQAEDRGDSIVLYAPNAFIVDQVRERYLPRIRELLAYFAGNGEVALAVGSRPRAPEPAPAPVAATIAPQAAPIAPFAGNLDSHYTFANFVEGRSNQLGLAAAIQAAQKPGDRAHNPLLLYGSTGLGKTHLMFAAGNALRQAKPAAKVMYLRSEQFFSAMIRALQDKAMDQFKRQFQQIDALLIDDIQFFAGKDRTQEEFFHTFNALFDGRQQIILTCDRYPREVEGLEPRLKSRLAWGLSVAIDPPDFETRAAIVLAKARERGAEIPDDVAFLIAKKMRSNVRDLEGALNTLVARANFTGRSITVEFAQETLRDLLRAQQQAIGIPNIQKTVADYYGLQMKDLLSKRRTRSLARPRQVAMALAKELTEHSLPEIGDAFAGRDHTTVLHACRQIRTLMEADGKLREDWEKLIRKLSE.

The tract at residues 1–75 (MDAWPRCLER…GNGEVALAVG (75 aa)) is domain I, interacts with DnaA modulators. The interval 75–104 (GSRPRAPEPAPAPVAATIAPQAAPIAPFAG) is domain II. The segment at 105-322 (NLDSHYTFAN…GALNTLVARA (218 aa)) is domain III, AAA+ region. 4 residues coordinate ATP: glycine 150, glycine 152, lysine 153, and threonine 154. The tract at residues 323–442 (NFTGRSITVE…WEKLIRKLSE (120 aa)) is domain IV, binds dsDNA.

Belongs to the DnaA family. As to quaternary structure, oligomerizes as a right-handed, spiral filament on DNA at oriC.

The protein localises to the cytoplasm. Plays an essential role in the initiation and regulation of chromosomal replication. ATP-DnaA binds to the origin of replication (oriC) to initiate formation of the DNA replication initiation complex once per cell cycle. Binds the DnaA box (a 9 base pair repeat at the origin) and separates the double-stranded (ds)DNA. Forms a right-handed helical filament on oriC DNA; dsDNA binds to the exterior of the filament while single-stranded (ss)DNA is stabiized in the filament's interior. The ATP-DnaA-oriC complex binds and stabilizes one strand of the AT-rich DNA unwinding element (DUE), permitting loading of DNA polymerase. After initiation quickly degrades to an ADP-DnaA complex that is not apt for DNA replication. Binds acidic phospholipids. This Xanthomonas oryzae pv. oryzae (strain PXO99A) protein is Chromosomal replication initiator protein DnaA.